A 502-amino-acid polypeptide reads, in one-letter code: Alpha-globin transcription factor CP2 (502 aa).

The region spanning 63–300 is the Grh/CP2 DB domain; that stretch reads EILPFQYVLC…SPGFNSSHSS (238 aa). The tract at residues 133–386 is DNA-binding; the sequence is EHQQLEGWRW…LFNALKGRMV (254 aa). A compositionally biased stretch (basic and acidic residues) spans 241-265; it reads KGADRKQKIDREKMEKRTPHEKEKY. Disordered regions lie at residues 241–268 and 294–326; these read KGAD…YQPS and FNSS…NLLP. The residue at position 353 (serine 353) is a Phosphoserine.

It belongs to the grh/CP2 family. CP2 subfamily. Binds to DNA as a dimer. Interacts with UBP1 and PIAS1, and is probably part of a complex containing TFCP2, UBP1 and PIAS1. Component of the SSP (stage selector protein) complex, which appears to be a heteromer of TFCP2 and 2 copies of NFE4.

The protein localises to the nucleus. Functionally, binds a variety of cellular promoters including fibrinogen, alpha-globin promoters. Activation of the alpha-globin promoter in erythroid cells is via synergistic interaction with UBP1. Functions as part of the SSP (stage selector protein) complex. Facilitates the interaction of the gamma-globin genes with enhancer elements contained in the locus control region in fetal erythroid cells. Interacts by binding to the stage selector element (SSE) in the proximal gamma-globin promoter. This is Alpha-globin transcription factor CP2 (Tfcp2) from Mus musculus (Mouse).